Reading from the N-terminus, the 43-residue chain is Protein PsbN (43 aa).

A helical membrane pass occupies residues 3 to 23 (IATLVAIFISGLLVSFTGYAL).

The protein belongs to the PsbN family.

It localises to the plastid. The protein localises to the chloroplast thylakoid membrane. May play a role in photosystem I and II biogenesis. The polypeptide is Protein PsbN (Euonymus alatus (Burning bush)).